The primary structure comprises 741 residues: Cellulose 1,4-beta-cellobiosidase (reducing end) CelS (741 aa).

The N-terminal stretch at 1 to 27 is a signal peptide; that stretch reads MVKSRKISILLAVAMLVSIMIPTTAFA. Glu76 is a substrate binding site. Glu87 (proton donor) is an active-site residue. Substrate is bound by residues Thr140, Asn204, Asp241, Gln247, and 251-252; that span reads TN. Asp255 functions as the Nucleophile in the catalytic mechanism. Substrate-binding positions include 301 to 302, 326 to 327, Tyr421, Asp520, and 645 to 646; these read KY, WY, and WH. The Dockerin domain occupies 673 to 739; it reads STKLYGDVND…ILKEIDTLPY (67 aa). The Ca(2+) site is built by Asp679, Asn681, Asp683, Gly684, Lys685, Asp690, Asp711, Leu712, Asn713, Asp715, Arg717, and Asp722.

Belongs to the glycosyl hydrolase 48 (cellulase L) family.

The protein resides in the secreted. It catalyses the reaction Hydrolysis of (1-&gt;4)-beta-D-glucosidic linkages in cellulose and similar substrates, releasing cellobiose from the reducing ends of the chains.. Its activity is regulated as follows. Inhibited by cellobiose and lactose, but not by glucose. Its function is as follows. This enzyme catalyzes the exohydrolysis of 1,4-beta-glucosidic linkages in cellulose with a preference for amorphous or crystalline cellulose over carboxymethyl cellulose. The chain is Cellulose 1,4-beta-cellobiosidase (reducing end) CelS (celS) from Acetivibrio thermocellus (strain ATCC 27405 / DSM 1237 / JCM 9322 / NBRC 103400 / NCIMB 10682 / NRRL B-4536 / VPI 7372) (Clostridium thermocellum).